The chain runs to 584 residues: Probable DNA ligase (584 aa).

Glutamate 248 contacts ATP. The N6-AMP-lysine intermediate role is filled by lysine 250. Residues arginine 255, arginine 270, glutamate 299, phenylalanine 339, arginine 416, and lysine 422 each coordinate ATP.

This sequence belongs to the ATP-dependent DNA ligase family. The cofactor is Mg(2+).

It catalyses the reaction ATP + (deoxyribonucleotide)n-3'-hydroxyl + 5'-phospho-(deoxyribonucleotide)m = (deoxyribonucleotide)n+m + AMP + diphosphate.. Functionally, DNA ligase that seals nicks in double-stranded DNA during DNA replication, DNA recombination and DNA repair. In Aquifex aeolicus (strain VF5), this protein is Probable DNA ligase.